A 365-amino-acid chain; its full sequence is Dual-specificity RNA methyltransferase RlmN (365 aa).

Catalysis depends on glutamate 91, which acts as the Proton acceptor. In terms of domain architecture, Radical SAM core spans 97 to 337; sequence ETSRGTLCIS…TTVRKTRGDD (241 aa). A disulfide bond links cysteine 104 and cysteine 342. Positions 111, 115, and 118 each coordinate [4Fe-4S] cluster. Residues 168–169, serine 200, 222–224, and asparagine 299 each bind S-adenosyl-L-methionine; these read GE and SLH. The active-site S-methylcysteine intermediate is the cysteine 342.

It belongs to the radical SAM superfamily. RlmN family. Requires [4Fe-4S] cluster as cofactor.

The protein resides in the cytoplasm. It catalyses the reaction adenosine(2503) in 23S rRNA + 2 reduced [2Fe-2S]-[ferredoxin] + 2 S-adenosyl-L-methionine = 2-methyladenosine(2503) in 23S rRNA + 5'-deoxyadenosine + L-methionine + 2 oxidized [2Fe-2S]-[ferredoxin] + S-adenosyl-L-homocysteine. The enzyme catalyses adenosine(37) in tRNA + 2 reduced [2Fe-2S]-[ferredoxin] + 2 S-adenosyl-L-methionine = 2-methyladenosine(37) in tRNA + 5'-deoxyadenosine + L-methionine + 2 oxidized [2Fe-2S]-[ferredoxin] + S-adenosyl-L-homocysteine. Functionally, specifically methylates position 2 of adenine 2503 in 23S rRNA and position 2 of adenine 37 in tRNAs. m2A2503 modification seems to play a crucial role in the proofreading step occurring at the peptidyl transferase center and thus would serve to optimize ribosomal fidelity. In Nitrosospira multiformis (strain ATCC 25196 / NCIMB 11849 / C 71), this protein is Dual-specificity RNA methyltransferase RlmN.